Consider the following 75-residue polypeptide: Cytochrome c oxidase assembly factor 5 (75 aa).

Residues 28–66 (QSDCVLQEGKSPKECLKEGYCKALQVTFFECKRSILDNR) enclose the CHCH domain. Positions 31-42 (CVLQEGKSPKEC) match the Cx10C motif motif. 2 disulfide bridges follow: Cys-31–Cys-58 and Cys-42–Cys-48. Positions 48–58 (CKALQVTFFEC) match the Cx9C motif motif.

Belongs to the PET191 family.

Involved in an early step of the mitochondrial complex IV assembly process. This Xenopus laevis (African clawed frog) protein is Cytochrome c oxidase assembly factor 5 (coa5).